The following is a 393-amino-acid chain: PxcA-like protein (393 aa).

A run of 4 helical transmembrane segments spans residues 173–193 (FLIVLIFIPLTVQILTKNLVF), 271–291 (IVNLLADIAGLVAFVVLIIVF), 306–326 (FLALNDITKVFIFILLTDMFV), and 354–374 (VYIFIATVPVFLDSLFKLLIF).

It belongs to the CemA family. PxcL subfamily.

It is found in the cell inner membrane. In terms of biological role, together with PxcA, contributes to transient H(+) uptake following dark to light transition. Required for H(+) influx to activate the Calvin-Benson-Bassham cycle. May also be involved in CO(2) transport. This Synechocystis sp. (strain ATCC 27184 / PCC 6803 / Kazusa) protein is PxcA-like protein.